The following is a 983-amino-acid chain: Poly [ADP-ribose] polymerase 1 (983 aa).

2 PARP-type zinc fingers span residues 8-91 (WRAE…ESGA) and 114-194 (YGIE…KKAL). Zn(2+) contacts are provided by Cys-20, Cys-23, His-52, Cys-55, Cys-126, Cys-129, His-156, and Cys-159. The segment at 197 to 246 (AKTETAEARQTNSRAGTKRKNDSVDNEKSKLAKSSFDMSTSGALQPCSKE) is disordered. A compositionally biased stretch (basic and acidic residues) spans 215-226 (RKNDSVDNEKSK). The region spanning 236-375 (TSGALQPCSK…SVKPKRILRP (140 aa)) is the PADR1 zinc-binding domain. The zinc ribbon stretch occupies residues 301 to 345 (GPLALCPMCSGHLSFSGGLYRCHGYISEWSKCSHSTLDPDRIKGK). 4 residues coordinate Zn(2+): Cys-306, Cys-309, Cys-322, and Cys-332. The tract at residues 369–397 (PKRILRPVLSGETSQGQGSKDATDSSRSE) is disordered. The span at 379–388 (GETSQGQGSK) shows a compositional bias: polar residues. The BRCT domain maps to 394-484 (SRSERLADLK…RKLPFDKYKI (91 aa)). Residues 511–611 (HCHILEDGNS…TNFQKQPGKF (101 aa)) form the WGR domain. A PARP alpha-helical domain is found at 633 to 751 (SSNLAPSLIE…DIEIASRIVG (119 aa)). The PARP catalytic domain occupies 758 to 983 (ESLDDKYKKL…LLKVRFKHKR (226 aa)).

The protein belongs to the ARTD/PARP family.

It localises to the nucleus. The enzyme catalyses NAD(+) + (ADP-D-ribosyl)n-acceptor = nicotinamide + (ADP-D-ribosyl)n+1-acceptor + H(+).. It carries out the reaction L-aspartyl-[protein] + NAD(+) = 4-O-(ADP-D-ribosyl)-L-aspartyl-[protein] + nicotinamide. It catalyses the reaction L-glutamyl-[protein] + NAD(+) = 5-O-(ADP-D-ribosyl)-L-glutamyl-[protein] + nicotinamide. Functionally, involved in the base excision repair (BER) pathway, by catalyzing the poly(ADP-ribosyl)ation of a limited number of acceptor proteins involved in chromatin architecture and in DNA metabolism. This modification follows DNA damages and appears as an obligatory step in a detection/signaling pathway leading to the reparation of DNA strand breaks. The sequence is that of Poly [ADP-ribose] polymerase 1 (PARP1) from Arabidopsis thaliana (Mouse-ear cress).